Consider the following 504-residue polypeptide: MSPVTGEETPAEQQGTADNPVYVRRIMGLETEYGITNVLDGTRRLGPDEVSRLLFSPIVEKYRSSNIFTENASRLYLDVGAHPEIATAECDSLHQLLAYDRAGDELVQQLASRAEEELASNGIGGNVFLLKNNTDSMGNSYGCHENYLISRNVLLKHLSSQLLPFLVTRQLICGAGKLTIPSPGAPNENFEAGFMMSQRADYMWEGISSATTRSRPIINTRDEPHADSSKYRRLHVIVGDSNMSETTTALKIGSALLVLEMIEAGAELPNYELANEIRAIRDIARDFTGLTEVKLRSGETATPLEIQRTFHAAAVHWLEHRPEPECVDGRWLGTPREQLAPVVELWGRVLDCFETGDFSPVDTEIDWVIKKKLLHGMASRHGLEMTDPRLAQIDLRYHDIHPARGLFNVLKRRGQAASILGEEQIREAMDQAPATTRAALRGRFLTAAREHGCATTVDWMRLKINGEFGSEVALPNPFAATDPQVDEMIASMADLGDTDATARG.

Mg(2+) is bound at residue glutamate 30. An ATP-binding site is contributed by arginine 74. A Mg(2+)-binding site is contributed by tyrosine 76. Aspartate 78 functions as the Proton acceptor in the catalytic mechanism. Glutamate 84 is a Mg(2+) binding site. ATP-binding residues include threonine 87 and tryptophan 459.

Belongs to the Pup ligase/Pup deamidase family. Pup-conjugating enzyme subfamily.

It carries out the reaction ATP + [prokaryotic ubiquitin-like protein]-L-glutamate + [protein]-L-lysine = ADP + phosphate + N(6)-([prokaryotic ubiquitin-like protein]-gamma-L-glutamyl)-[protein]-L-lysine.. The protein operates within protein degradation; proteasomal Pup-dependent pathway. It participates in protein modification; protein pupylation. In terms of biological role, catalyzes the covalent attachment of the prokaryotic ubiquitin-like protein modifier Pup to the proteasomal substrate proteins, thereby targeting them for proteasomal degradation. This tagging system is termed pupylation. The ligation reaction involves the side-chain carboxylate of the C-terminal glutamate of Pup and the side-chain amino group of a substrate lysine. The sequence is that of Pup--protein ligase from Corynebacterium urealyticum (strain ATCC 43042 / DSM 7109).